We begin with the raw amino-acid sequence, 272 residues long: MAIKVVKNLVSKSKYGLKCPNPMKAEYITIHNTANDASAANEISYMKNNSSSTSFHFAVDDKQVIQGIPTNRNAWHTGDGTNGTGNRKSIGVEICYSKSGGVRYKAAEKLAIKFVAQLLKERGWGIDRVRKHQDWNGKYCPHRILSEGRWIQVKTAIEAELKKLGGKTNSSKASVAKKKTTNTSSKKTSYALPSGIFKVKSPMMRGEKVTQIQKALAALYFYPDKGAKNNGIDGVYGPKTADAIRRFQSMYGLTQDGIYGPKTKAKLEALLK.

Residues 24–142 (KAEYITIHNT…QDWNGKYCPH (119 aa)) enclose the N-acetylmuramoyl-L-alanine amidase domain.

The protein belongs to the N-acetylmuramoyl-L-alanine amidase 2 family.

It catalyses the reaction Hydrolyzes the link between N-acetylmuramoyl residues and L-amino acid residues in certain cell-wall glycopeptides.. In terms of biological role, autolysins are involved in some important biological processes such as cell separation, cell-wall turnover, competence for genetic transformation, formation of the flagella and sporulation. This Bacillus subtilis (strain 168) protein is N-acetylmuramoyl-L-alanine amidase CwlA (cwlA).